Consider the following 637-residue polypeptide: Zinc finger protein rsv2 (637 aa).

Disordered regions lie at residues Met-1–Asn-41, Ser-145–Ala-164, Ile-169–Ser-207, Thr-221–Leu-363, Gln-404–Tyr-427, and Ser-440–Arg-558. The span at Ala-172–Ser-189 shows a compositional bias: low complexity. Residues Pro-196–Ser-207 show a composition bias toward polar residues. Positions Ser-279–Lys-296 are enriched in basic and acidic residues. Polar residues predominate over residues Val-298–Glu-344. Composition is skewed to basic and acidic residues over residues Gln-345 to Lys-355 and Gln-404 to Lys-413. Low complexity predominate over residues Val-455–Val-471. Composition is skewed to polar residues over residues Lys-472 to Ala-498 and Tyr-508 to Ser-527. The segment covering Thr-544–Thr-554 has biased composition (low complexity). The C2H2-type 1 zinc finger occupies Val-572–His-603. A C2H2-type 2; degenerate zinc finger spans residues Phe-610 to His-635.

It is found in the nucleus. The chain is Zinc finger protein rsv2 (rsv2) from Schizosaccharomyces pombe (strain 972 / ATCC 24843) (Fission yeast).